The primary structure comprises 493 residues: Glutamyl-tRNA(Gln) amidotransferase subunit A (493 aa).

Residues lysine 78 and serine 158 each act as charge relay system in the active site. Serine 182 acts as the Acyl-ester intermediate in catalysis.

Belongs to the amidase family. GatA subfamily. In terms of assembly, heterotrimer of A, B and C subunits.

The catalysed reaction is L-glutamyl-tRNA(Gln) + L-glutamine + ATP + H2O = L-glutaminyl-tRNA(Gln) + L-glutamate + ADP + phosphate + H(+). Its function is as follows. Allows the formation of correctly charged Gln-tRNA(Gln) through the transamidation of misacylated Glu-tRNA(Gln) in organisms which lack glutaminyl-tRNA synthetase. The reaction takes place in the presence of glutamine and ATP through an activated gamma-phospho-Glu-tRNA(Gln). The chain is Glutamyl-tRNA(Gln) amidotransferase subunit A from Rickettsia conorii (strain ATCC VR-613 / Malish 7).